A 656-amino-acid polypeptide reads, in one-letter code: Leucine aminopeptidase 2 (656 aa).

Substrate-binding positions include 173 to 175 and 302 to 307; these read QLE and PYGGME. H331 contributes to the Zn(2+) binding site. E332 serves as the catalytic Proton acceptor. H335 and E354 together coordinate Zn(2+). Y420 (proton donor) is an active-site residue.

This sequence belongs to the peptidase M1 family. Zn(2+) is required as a cofactor.

It is found in the cytoplasm. The protein localises to the nucleus. It catalyses the reaction an epoxide + H2O = an ethanediol. Functionally, aminopeptidase that preferentially cleaves di- and tripeptides. Also has low epoxide hydrolase activity (in vitro). Can hydrolyze the epoxide leukotriene LTA(4) but it forms preferentially 5,6-dihydroxy-7,9,11,14-eicosatetraenoic acid rather than the cytokine leukotriene B(4) as the product compared to the homologous mammalian enzyme (in vitro). This is Leucine aminopeptidase 2 from Vanderwaltozyma polyspora (strain ATCC 22028 / DSM 70294 / BCRC 21397 / CBS 2163 / NBRC 10782 / NRRL Y-8283 / UCD 57-17) (Kluyveromyces polysporus).